We begin with the raw amino-acid sequence, 847 residues long: Mitogen-activated protein kinase kinase kinase 11 (847 aa).

S11 carries the post-translational modification Phosphoserine. The tract at residues 11-38 is disordered; it reads SPLGSWNGSGSGGGGGGGGGRPEGSPKA. A compositionally biased stretch (gly residues) spans 17–32; it reads NGSGSGGGGGGGGGRP. A Phosphoserine modification is found at S35. In terms of domain architecture, SH3 spans 41–105; it reads YANPVWTALF…PSNYVSRGGG (65 aa). The 263-residue stretch at 117–379 folds into the Protein kinase domain; that stretch reads LRLEEVIGIG…ASILQQLEAL (263 aa). ATP contacts are provided by residues 123-131 and K144; that span reads IGIGGFGKV. Residue D241 is the Proton acceptor of the active site. T277 carries the phosphothreonine; by autocatalysis modification. S281 is modified (phosphoserine; by autocatalysis and MAP4K1). S394 carries the phosphoserine modification. Leucine-zipper stretches follow at residues 403–424 and 438–459; these read IQGL…EEEL and LRRR…ELTL. Residues S507, S524, S548, S555, and S556 each carry the phosphoserine modification. A disordered region spans residues 537 to 643; sequence PAEPGQAWGR…SSGTPKLIQR (107 aa). Over residues 550 to 562 the composition is skewed to basic and acidic residues; that stretch reads RRLEDSSNGERRA. Low complexity predominate over residues 597-609; that stretch reads SSPLGSPSTPPAL. Residues S654, S693, and S705 each carry the phosphoserine modification. A disordered region spans residues 655–847; that stretch reads LGLGRDLQPP…QAPWVPEAGP (193 aa). Residues 676 to 694 show a composition bias toward pro residues; sequence TTPPTPTPAPCPTEPPPSP. At T708 the chain carries Phosphothreonine. Residues S724, S727, S740, S748, S758, S770, S789, S793, and S815 each carry the phosphoserine modification. Residues 760 to 773 show a composition bias toward low complexity; that stretch reads PLGLISRPRPSPLR. The span at 787 to 799 shows a compositional bias: pro residues; it reads RPSPLPSPQPAPR. Over residues 800-816 the composition is skewed to low complexity; sequence RAPWTLFPDSDPFWDSP.

It belongs to the protein kinase superfamily. STE Ser/Thr protein kinase family. MAP kinase kinase kinase subfamily. As to quaternary structure, homodimer; undergoes dimerization during activation. Interacts with MAP2K4/MKK4. Interacts with MAP2K7/MKK7. Found in a complex with SH3RF1, RAC1, MAP2K7/MKK7, MAPK8IP1/JIP1 and MAPK8/JNK1. The cofactor is Mg(2+). Autophosphorylation on serine and threonine residues within the activation loop plays a role in enzyme activation. Thr-277 is likely to be the main autophosphorylation site. Phosphorylation of Ser-555 and Ser-556 is induced by CDC42. Expressed in a wide variety of normal and neoplastic tissues including fetal lung, liver, heart and kidney, and adult lung, liver, heart, kidney, placenta, skeletal muscle, pancreas and brain.

Its subcellular location is the cytoplasm. It localises to the cytoskeleton. The protein localises to the microtubule organizing center. The protein resides in the centrosome. The enzyme catalyses L-seryl-[protein] + ATP = O-phospho-L-seryl-[protein] + ADP + H(+). The catalysed reaction is L-threonyl-[protein] + ATP = O-phospho-L-threonyl-[protein] + ADP + H(+). With respect to regulation, homodimerization via the leucine zipper domains is required for autophosphorylation and subsequent activation. Functionally, activates the JUN N-terminal pathway. Required for serum-stimulated cell proliferation and for mitogen and cytokine activation of MAPK14 (p38), MAPK3 (ERK) and MAPK8 (JNK1) through phosphorylation and activation of MAP2K4/MKK4 and MAP2K7/MKK7. Plays a role in mitogen-stimulated phosphorylation and activation of BRAF, but does not phosphorylate BRAF directly. Influences microtubule organization during the cell cycle. The chain is Mitogen-activated protein kinase kinase kinase 11 from Homo sapiens (Human).